The following is a 153-amino-acid chain: uncharacterized protein (153 aa).

The interval 17–78 (IYIHTPHPHP…HTTLSNLSLN (62 aa)) is disordered. The span at 22–38 (PHPHPHPHPHTPTHTHP) shows a compositional bias: basic residues.

This is an uncharacterized protein from Saccharomyces cerevisiae (strain ATCC 204508 / S288c) (Baker's yeast).